The primary structure comprises 139 residues: MAPKSVASKAPASQASKAPAAASKAPAKAAKTSAAPKDGAKKRSKKRVESYSSYIYKVLKQVHPDTGISNKAMAILNSFVSDIFERIATEASKLASYNHRSTISSREIQTSVRLILPGELSKHAISEGTKAVTKYSSSK.

Residues 1 to 37 show a composition bias toward low complexity; that stretch reads MAPKSVASKAPASQASKAPAAASKAPAKAAKTSAAPK. The segment at 1–48 is disordered; the sequence is MAPKSVASKAPASQASKAPAAASKAPAKAAKTSAAPKDGAKKRSKKRV. Lys-9 is subject to N6-acetyllysine; alternate. Lys-9 participates in a covalent cross-link: Glycyl lysine isopeptide (Lys-Gly) (interchain with G-Cter in SUMO); alternate. Ser-13 carries the post-translational modification Phosphoserine. Lys-17 carries the N6-acetyllysine modification. Lys-134 participates in a covalent cross-link: Glycyl lysine isopeptide (Lys-Gly) (interchain with G-Cter in ubiquitin).

This sequence belongs to the histone H2B family. In terms of assembly, the nucleosome is a histone octamer containing two molecules each of H2A, H2B, H3 and H4 assembled in one H3-H4 heterotetramer and two H2A-H2B heterodimers. The octamer wraps approximately 147 bp of DNA. In terms of processing, monoubiquitinated by the UBC2-BRE1 complex to form H2BK123ub1. H2BK123ub1 gives a specific tag for epigenetic transcriptional activation and is also prerequisite for H3K4me and H3K79me formation. H2BK123ub1 also modulates the formation of double-strand breaks during meiosis and is a prerequisite for DNA-damage checkpoint activation. Post-translationally, phosphorylated to form H2BS10ph during progression through meiotic prophase. May be correlated with chromosome condensation. Acetylation of N-terminal lysines and particularly formation of H2BK11ac has a positive effect on transcription. In terms of processing, sumoylation to form H2BK6su occurs preferentially near the telomeres and represses gene transcription.

The protein localises to the nucleus. The protein resides in the chromosome. In terms of biological role, core component of nucleosome. Nucleosomes wrap and compact DNA into chromatin, limiting DNA accessibility to the cellular machineries which require DNA as a template. Histones thereby play a central role in transcription regulation, DNA repair, DNA replication and chromosomal stability. DNA accessibility is regulated via a complex set of post-translational modifications of histones, also called histone code, and nucleosome remodeling. The polypeptide is Histone H2B (HTB1) (Cryptococcus neoformans var. neoformans serotype D (strain B-3501A) (Filobasidiella neoformans)).